The following is a 330-amino-acid chain: Phenylalanine--tRNA ligase alpha subunit (330 aa).

Glu-257 provides a ligand contact to Mg(2+).

It belongs to the class-II aminoacyl-tRNA synthetase family. Phe-tRNA synthetase alpha subunit type 1 subfamily. Tetramer of two alpha and two beta subunits. It depends on Mg(2+) as a cofactor.

The protein resides in the cytoplasm. The enzyme catalyses tRNA(Phe) + L-phenylalanine + ATP = L-phenylalanyl-tRNA(Phe) + AMP + diphosphate + H(+). The polypeptide is Phenylalanine--tRNA ligase alpha subunit (Nostoc sp. (strain PCC 7120 / SAG 25.82 / UTEX 2576)).